Consider the following 1895-residue polypeptide: MAHLKLDTLHVQRSPRGSRRSSPSSGRSSACSSGSISPVPIIPIISISHDGDESESESEIETEPARLFQRRMSTKCTNNLAAIIKEGFLLKHTWSFQRWRRRYFRLKRNMLFYAKDEKCDVFDDIDLSDLCYFECGIKNVNHSFQIITPTRSLVLCAESRREMEDWLGSLKTATAPQRPRGDSFLIEQHDILSNHHHWYATSHARPTYCNVCRDALSGVTSHGLSCEVCKCKVHKRCAAKSIANCKWTTLASVGKDIIEQADGIIMPHQWMEGNLPVSSMCAVCKKTCGSVLRLQDWRCLWCRATVHVACRPQMAVACPIGPAKLSVVPPTSVHSISTDDAWDVASPKGNFSPLLVFVNSKSGDNQGVKFLRRFKQLLNPAQVFDLISTGPSLGLRLFRHFEMFRILVCSGDGSVGWVLSEIDRFNMHKQCQVAVMPLGTGNDLARVLGWGSSCDDDTHLPQILERYESASTKMLDRWSIMVFEKAIPVPKTPKMSISTEQEAMLTGMVTSANHHLRFIVETNDTQTLIRSTRNLCDTVDDLVCRISEHHKDDEQLAVKCDILRQKLNMLLDALQEEEIGAHSGDDLIATIRSLIARSIPVTPGSNAYLLNPNISIEKTEKDQINTKERRNSRSLRSSEKEALQCRANSVKRAIYNVVEHSEPGRPKRYQRKLSITPFEALKLPTASGESTPCTSPLPIIPPINIISPTMETSRLTCISPLPDTRRDSVDENFFNSINLPAPRQFADSRRSSGVEVIQEIEEGANGETVYRKSRMSLTGGANIDDAGNRLSPCSDAGENTPTERKVDFLRVPIHTGEPIVDPLCDYRPHEVFERTYYMTREMDKGKEKDKEKDKPVEIDKEKDTCVEKEGSMPAEKLVHTCNLQVPGVVVTPNPQNVYSSASITIIDTDAQTTTEQSSSDDLGGEASDVLSAISNEECSVASEIFDKQDAGQTVGDIIQNMDASNFTHIDSPETSDETEAMPGESIMDDISSVLGHDITYALQDNTLTDDTTTLCSEHAGPPKPPRKKSLSALSRTQAHPRRRNSSPPRMARLARMDSDDNPQQFGFENIVFEIDNRCDDQKMREPPRYCSLAQFVEGNDIARQSFKQLMLEQHRGGDNDSDYPEHEQTPTNKGANLLATTSEDELSTQTAIKIEIQDIDATVRNLNSSMKPNTILTTSTSPTKKSGHGQDVKRITFDESCKKESFDDVNPNYPQISVVVRPPTPLRGDCIKPTVSLLPVSSGGAMTVSMTCSGMLGVRAMNASEIRRHSSHAPGLAVREFDKDKDRRHSGFNPNQLTLDPEHARFLSSSPAASRRISCGSLFKPNEALPNLQTLKGSKSSLFMGSTLFGFDHLASAEKDKEEKSGKDKEKTPTDETNRKLPIINPLVRLPNWPNLANGGGFISKCLLANADTLCAAVSPLMDPDETLLAGYHEKCVMNNYFGIGIDAKISLDFHNKREEHPEKCRSRARNYMWYGVLGSKQLLQKTCKNLEQRVQLECDGQRIPLPELQGIVILNIPSFMGGTNFWGSSKKDDIFLPPSFDDRVLEVVAVFGSVQMAASRLINLQHHRIAQCQSVQINILGDEEIPIQVDGEAWLQPPGMIRILHKNRVQMLCRNRSLELSLKSWQEKQRQHSISIQRDASSTASEHANSTDEVISERECYVLLNFIEAVSSLVKWVKFLIISHPALQHDLYEVACRASEALESIHPQGKLLEGPSLRTKLVEVIDSSRQLYDDACTLLRDRGHSLILREDLETKLSAALANMEMELKKCSVQKCIDGKLRAYFNVLAPNEESDGRRKSRPFWVRLRSGSTAGQQAFKPPLTNTREAANNWSVNEVVTWLETMQLSEYVDSFLKNDIRGKELLTLGRRDLKDLGVVKVGHVKRILQAIKDLSEN.

Positions 1 to 10 (MAHLKLDTLH) are enriched in basic and acidic residues. The disordered stretch occupies residues 1–37 (MAHLKLDTLHVQRSPRGSRRSSPSSGRSSACSSGSIS). The segment covering 20 to 37 (RSSPSSGRSSACSSGSIS) has biased composition (low complexity). Positions 82-175 (AIIKEGFLLK…WLGSLKTATA (94 aa)) constitute a PH domain. 2 consecutive Phorbol-ester/DAG-type zinc fingers follow at residues 195–245 (HHHW…IANC) and 267–318 (PHQW…AVAC). The region spanning 349–485 (GNFSPLLVFV…DRWSIMVFEK (137 aa)) is the DAGKc domain. Disordered regions lie at residues 781-801 (ANID…ENTP), 1012-1053 (TTLC…MARL), 1113-1137 (QHRG…GANL), and 1172-1191 (PNTI…HGQD). Residues 1113-1128 (QHRGGDNDSDYPEHEQ) show a composition bias toward basic and acidic residues. Residues 1172-1184 (PNTILTTSTSPTK) show a composition bias toward polar residues. Residues 1832–1895 (WSVNEVVTWL…LQAIKDLSEN (64 aa)) enclose the SAM domain.

This sequence belongs to the eukaryotic diacylglycerol kinase family.

It localises to the cytoplasm. It carries out the reaction a 1,2-diacyl-sn-glycerol + ATP = a 1,2-diacyl-sn-glycero-3-phosphate + ADP + H(+). Phosphorylates diacylglycerol (DAG) to generate phosphatidic acid (PA). This chain is Diacylglycerol kinase eta, found in Drosophila melanogaster (Fruit fly).